The chain runs to 161 residues: Regulator of ribonuclease activity A (161 aa).

It belongs to the RraA family. In terms of assembly, homotrimer. Binds to both RNA-binding sites in the C-terminal region of Rne and to RhlB.

The protein localises to the cytoplasm. Functionally, globally modulates RNA abundance by binding to RNase E (Rne) and regulating its endonucleolytic activity. Can modulate Rne action in a substrate-dependent manner by altering the composition of the degradosome. Modulates RNA-binding and helicase activities of the degradosome. The chain is Regulator of ribonuclease activity A from Shewanella oneidensis (strain ATCC 700550 / JCM 31522 / CIP 106686 / LMG 19005 / NCIMB 14063 / MR-1).